Reading from the N-terminus, the 970-residue chain is Protein CLASP-3 (970 aa).

Disordered regions lie at residues 314 to 377 (SRLA…QKAR) and 651 to 675 (NGIS…ETPH). Residues 344–355 (GSRTRTSSITSN) show a composition bias toward polar residues. Residues 905–943 (ITPCVIKAYQSTSSSVRKTVVYCLVAMVNRVGEQRMAPH) form an HEAT repeat.

It belongs to the CLASP family.

Its subcellular location is the cytoplasm. The protein localises to the cytoskeleton. Its function is as follows. Microtubule plus-end tracking protein that promotes the stabilization of dynamic microtubules. This Caenorhabditis briggsae protein is Protein CLASP-3 (cls-3).